The chain runs to 469 residues: Sulfate adenylyltransferase subunit 1 (469 aa).

Positions 22–236 (KDMLRFLTCG…TLENIEIGND (215 aa)) constitute a tr-type G domain. The G1 stretch occupies residues 31-38 (GSVDDGKS). 31-38 (GSVDDGKS) contacts GTP. The interval 89-93 (GITID) is G2. Residues 110–113 (DTPG) are G3. GTP-binding positions include 110–114 (DTPGH) and 165–168 (NKMD). Residues 165–168 (NKMD) are G4. A G5 region spans residues 202–204 (SAL).

This sequence belongs to the TRAFAC class translation factor GTPase superfamily. Classic translation factor GTPase family. CysN/NodQ subfamily. Heterodimer composed of CysD, the smaller subunit, and CysN.

The catalysed reaction is sulfate + ATP + H(+) = adenosine 5'-phosphosulfate + diphosphate. The protein operates within sulfur metabolism; hydrogen sulfide biosynthesis; sulfite from sulfate: step 1/3. Its function is as follows. With CysD forms the ATP sulfurylase (ATPS) that catalyzes the adenylation of sulfate producing adenosine 5'-phosphosulfate (APS) and diphosphate, the first enzymatic step in sulfur assimilation pathway. APS synthesis involves the formation of a high-energy phosphoric-sulfuric acid anhydride bond driven by GTP hydrolysis by CysN coupled to ATP hydrolysis by CysD. The chain is Sulfate adenylyltransferase subunit 1 from Pseudoalteromonas atlantica (strain T6c / ATCC BAA-1087).